Here is a 56-residue protein sequence, read N- to C-terminus: Large ribosomal subunit protein bL33 (56 aa).

This sequence belongs to the bacterial ribosomal protein bL33 family.

The chain is Large ribosomal subunit protein bL33 from Treponema denticola (strain ATCC 35405 / DSM 14222 / CIP 103919 / JCM 8153 / KCTC 15104).